We begin with the raw amino-acid sequence, 130 residues long: Small ribosomal subunit protein uS8B (130 aa).

The protein belongs to the universal ribosomal protein uS8 family. In terms of assembly, component of the small ribosomal subunit (SSU). Mature yeast ribosomes consist of a small (40S) and a large (60S) subunit. The 40S small subunit contains 1 molecule of ribosomal RNA (18S rRNA) and 33 different proteins (encoded by 57 genes). The large 60S subunit contains 3 rRNA molecules (25S, 5.8S and 5S rRNA) and 46 different proteins (encoded by 81 genes).

It is found in the cytoplasm. Component of the ribosome, a large ribonucleoprotein complex responsible for the synthesis of proteins in the cell. The small ribosomal subunit (SSU) binds messenger RNAs (mRNAs) and translates the encoded message by selecting cognate aminoacyl-transfer RNA (tRNA) molecules. The large subunit (LSU) contains the ribosomal catalytic site termed the peptidyl transferase center (PTC), which catalyzes the formation of peptide bonds, thereby polymerizing the amino acids delivered by tRNAs into a polypeptide chain. The nascent polypeptides leave the ribosome through a tunnel in the LSU and interact with protein factors that function in enzymatic processing, targeting, and the membrane insertion of nascent chains at the exit of the ribosomal tunnel. This is Small ribosomal subunit protein uS8B from Saccharomyces cerevisiae (strain ATCC 204508 / S288c) (Baker's yeast).